The primary structure comprises 129 residues: uncharacterized protein (129 aa).

This is an uncharacterized protein from Mycoplasma genitalium (strain ATCC 33530 / DSM 19775 / NCTC 10195 / G37) (Mycoplasmoides genitalium).